A 511-amino-acid polypeptide reads, in one-letter code: Ribonuclease Y (511 aa).

The chain crosses the membrane as a helical span at residues 3–23 (VTIVASIACFIVGGILSYVLF). Residues 201-261 (SVTVFHIESD…VRREIARLAL (61 aa)) enclose the KH domain. Residues 327–420 (LLQHARETAN…VQVCDAISGA (94 aa)) enclose the HD domain.

This sequence belongs to the RNase Y family.

It localises to the cell membrane. In terms of biological role, endoribonuclease that initiates mRNA decay. This chain is Ribonuclease Y, found in Bacteroides fragilis (strain ATCC 25285 / DSM 2151 / CCUG 4856 / JCM 11019 / LMG 10263 / NCTC 9343 / Onslow / VPI 2553 / EN-2).